The chain runs to 198 residues: CASP-like protein 4B3 (198 aa).

A disordered region spans residues M1–A27. The Cytoplasmic segment spans residues M1–R51. Over residues S16–A27 the composition is skewed to low complexity. A helical membrane pass occupies residues L52–N72. The Extracellular segment spans residues K73–Y85. The helical transmembrane segment at P86–V106 threads the bilayer. The Cytoplasmic segment spans residues T107–K124. Residues A125–L145 traverse the membrane as a helical segment. Residues S146 to S166 are Extracellular-facing. A helical transmembrane segment spans residues A167–V187. Over S188–V198 the chain is Cytoplasmic.

This sequence belongs to the Casparian strip membrane proteins (CASP) family. Homodimer and heterodimers.

The protein resides in the cell membrane. This chain is CASP-like protein 4B3, found in Oryza sativa subsp. japonica (Rice).